Consider the following 219-residue polypeptide: GTP-binding protein Rab-3D (219 aa).

N-acetylalanine is present on Ala2. A GDP-binding site is contributed by 29 to 37 (GNSSVGKTS). GTP is bound by residues Ser31, Ser32, Val33, Gly34, Lys35, Thr36, Ser37, Pro49, and Ser53. Thr36 serves as a coordination point for Mg(2+). The short motif at 49–58 (PAFVSTVGID) is the Switch 1 element. Residues Thr54 and Asp77 each contribute to the Mg(2+) site. A GTP-binding site is contributed by Gly80. The Switch 2 motif lies at 80 to 96 (GQERYRTITTAYYRGAM). Thr86 is subject to Phosphothreonine. GTP-binding residues include Asn135, Lys136, Asp138, Ala166, and Lys167. GDP is bound by residues 135–138 (NKCD) and 165–167 (SAK). Ser190 bears the Phosphoserine mark. Residues 190-219 (SLEPSSSPGSNGKGPALGDTPPPQPSSCGC) form a disordered region. Residues 193–203 (PSSSPGSNGKG) are compositionally biased toward low complexity. Residues 209 to 219 (TPPPQPSSCGC) are compositionally biased toward pro residues. S-geranylgeranyl cysteine attachment occurs at residues Cys217 and Cys219. Cys219 carries the post-translational modification Cysteine methyl ester; partial.

This sequence belongs to the small GTPase superfamily. Rab family. In terms of assembly, interacts with RIMS1, RIMS2, RPH3A and RPH3AL. Interacts with RAB3IP. The GTP-bound form interacts with REP15. Interacts with CHM; phosphorylation at Thr-86 disrupts this interaction. Interacts with MADD (via uDENN domain); the GTP-bound form is preferred for interaction. It depends on Mg(2+) as a cofactor. Post-translationally, in fetal glands the majority of the proteins are methylated, whereas in neonatal and adult glands, only 50% are methylated. In terms of processing, phosphorylation of Thr-86 in the switch II region by LRRK2 prevents the association of RAB regulatory proteins, including CHM. In terms of tissue distribution, highest levels found in lung.

It localises to the cell membrane. The catalysed reaction is GTP + H2O = GDP + phosphate + H(+). Regulated by guanine nucleotide exchange factors (GEFs) which promote the exchange of bound GDP for free GTP. Regulated by GTPase activating proteins (GAPs) which increase the GTP hydrolysis activity. Inhibited by GDP dissociation inhibitors (GDIs) which prevent Rab-GDP dissociation. The small GTPases Rab are key regulators of intracellular membrane trafficking, from the formation of transport vesicles to their fusion with membranes. Rabs cycle between an inactive GDP-bound form and an active GTP-bound form that is able to recruit to membranes different sets of downstream effectors directly responsible for vesicle formation, movement, tethering and fusion. RAB3D may be involved in the insulin-induced exocytosis of GLUT4-containing vesicles in adipocytes. The sequence is that of GTP-binding protein Rab-3D from Rattus norvegicus (Rat).